Here is a 177-residue protein sequence, read N- to C-terminus: Large ribosomal subunit protein uL6 (177 aa).

It belongs to the universal ribosomal protein uL6 family. Part of the 50S ribosomal subunit.

Its function is as follows. This protein binds to the 23S rRNA, and is important in its secondary structure. It is located near the subunit interface in the base of the L7/L12 stalk, and near the tRNA binding site of the peptidyltransferase center. The polypeptide is Large ribosomal subunit protein uL6 (Actinobacillus pleuropneumoniae serotype 5b (strain L20)).